We begin with the raw amino-acid sequence, 151 residues long: Large ribosomal subunit protein bL9 (151 aa).

This sequence belongs to the bacterial ribosomal protein bL9 family.

Functionally, binds to the 23S rRNA. The sequence is that of Large ribosomal subunit protein bL9 from Prochlorococcus marinus (strain MIT 9312).